A 177-amino-acid polypeptide reads, in one-letter code: Large ribosomal subunit protein uL6 (177 aa).

Belongs to the universal ribosomal protein uL6 family. As to quaternary structure, part of the 50S ribosomal subunit.

Functionally, this protein binds to the 23S rRNA, and is important in its secondary structure. It is located near the subunit interface in the base of the L7/L12 stalk, and near the tRNA binding site of the peptidyltransferase center. This Natronomonas pharaonis (strain ATCC 35678 / DSM 2160 / CIP 103997 / JCM 8858 / NBRC 14720 / NCIMB 2260 / Gabara) (Halobacterium pharaonis) protein is Large ribosomal subunit protein uL6.